The sequence spans 311 residues: Asialoglycoprotein receptor 2 (311 aa).

Residues 1 to 44 (MAKDFQDIQQLSSEENDHPFHQGEGPGTRRLNPRRGNPFLKGPP) form a disordered region. Residues 1 to 58 (MAKDFQDIQQLSSEENDHPFHQGEGPGTRRLNPRRGNPFLKGPPPAQPLAQRLCSMVC) lie on the Cytoplasmic side of the membrane. An Endocytosis signal motif is present at residues 5–8 (FQDI). At serine 13 the chain carries Phosphoserine. Cysteine 54 is lipidated: S-palmitoyl cysteine. A helical; Signal-anchor for type II membrane protein membrane pass occupies residues 59-79 (FSLLALSFNILLLVVICVTGS). At 80–311 (QSEGHGGAQL…KRRNATGEVA (232 aa)) the chain is on the extracellular side. Asparagine 102 and asparagine 170 each carry an N-linked (GlcNAc...) asparagine glycan. The C-type lectin domain maps to 176 to 302 (CCPVNWVEHQ…LQVYRWVCEK (127 aa)). 3 disulfide bridges follow: cysteine 177/cysteine 188, cysteine 205/cysteine 300, and cysteine 278/cysteine 292. N-linked (GlcNAc...) asparagine glycosylation occurs at asparagine 305.

As to quaternary structure, the functioning ligand-binding unit of this receptor is thought to be at least a dimer. Interacts with LASS2. In terms of assembly, (Microbial infection) Interacts with hepatitis E virus capsid protein ORF2. Expressed exclusively in hepatic parenchymal cells.

It is found in the membrane. Functionally, mediates the endocytosis of plasma glycoproteins to which the terminal sialic acid residue on their complex carbohydrate moieties has been removed. The receptor recognizes terminal galactose and N-acetylgalactosamine units. After ligand binding to the receptor, the resulting complex is internalized and transported to a sorting organelle, where receptor and ligand are disassociated. The receptor then returns to the cell membrane surface. The chain is Asialoglycoprotein receptor 2 (ASGR2) from Homo sapiens (Human).